A 278-amino-acid polypeptide reads, in one-letter code: 4-hydroxy-3-methylbut-2-enyl diphosphate reductase (278 aa).

C12 contacts [4Fe-4S] cluster. H36 and H70 together coordinate (2E)-4-hydroxy-3-methylbut-2-enyl diphosphate. Dimethylallyl diphosphate is bound by residues H36 and H70. Isopentenyl diphosphate is bound by residues H36 and H70. Position 92 (C92) interacts with [4Fe-4S] cluster. H120 contributes to the (2E)-4-hydroxy-3-methylbut-2-enyl diphosphate binding site. H120 contacts dimethylallyl diphosphate. An isopentenyl diphosphate-binding site is contributed by H120. The Proton donor role is filled by E122. A (2E)-4-hydroxy-3-methylbut-2-enyl diphosphate-binding site is contributed by T158. A [4Fe-4S] cluster-binding site is contributed by C186. (2E)-4-hydroxy-3-methylbut-2-enyl diphosphate-binding residues include S214, N216, and S258. Residues S214, N216, and S258 each coordinate dimethylallyl diphosphate. Positions 214, 216, and 258 each coordinate isopentenyl diphosphate.

This sequence belongs to the IspH family. It depends on [4Fe-4S] cluster as a cofactor.

It catalyses the reaction isopentenyl diphosphate + 2 oxidized [2Fe-2S]-[ferredoxin] + H2O = (2E)-4-hydroxy-3-methylbut-2-enyl diphosphate + 2 reduced [2Fe-2S]-[ferredoxin] + 2 H(+). The enzyme catalyses dimethylallyl diphosphate + 2 oxidized [2Fe-2S]-[ferredoxin] + H2O = (2E)-4-hydroxy-3-methylbut-2-enyl diphosphate + 2 reduced [2Fe-2S]-[ferredoxin] + 2 H(+). It functions in the pathway isoprenoid biosynthesis; dimethylallyl diphosphate biosynthesis; dimethylallyl diphosphate from (2E)-4-hydroxy-3-methylbutenyl diphosphate: step 1/1. The protein operates within isoprenoid biosynthesis; isopentenyl diphosphate biosynthesis via DXP pathway; isopentenyl diphosphate from 1-deoxy-D-xylulose 5-phosphate: step 6/6. Catalyzes the conversion of 1-hydroxy-2-methyl-2-(E)-butenyl 4-diphosphate (HMBPP) into a mixture of isopentenyl diphosphate (IPP) and dimethylallyl diphosphate (DMAPP). Acts in the terminal step of the DOXP/MEP pathway for isoprenoid precursor biosynthesis. This is 4-hydroxy-3-methylbut-2-enyl diphosphate reductase from Campylobacter lari (strain RM2100 / D67 / ATCC BAA-1060).